We begin with the raw amino-acid sequence, 226 residues long: Fibronectin type III domain-containing protein 9 (226 aa).

In terms of domain architecture, Fibronectin type-III spans 1–101 (MNIEVGNVSH…FHTLDKSPLA (101 aa)). Residues 113–133 (LWVLMAILLACFTAVLAFICL) traverse the membrane as a helical segment.

The protein localises to the membrane. The chain is Fibronectin type III domain-containing protein 9 (Fndc9) from Mus musculus (Mouse).